Here is a 216-residue protein sequence, read N- to C-terminus: Ras-related protein Rab-5C (216 aa).

Positions 30, 31, 33, 34, 35, 36, 47, 48, 53, and 79 each coordinate GTP. A Mg(2+)-binding site is contributed by Ser35. 2 short sequence motifs (switch) span residues 45 to 57 (QFHEYQESTIGAA) and 78 to 94 (AGQERYHSLAPMYYRGA). Thr53 is a binding site for Mg(2+). The residue at position 85 (Ser85) is a Phosphoserine. 5 residues coordinate GTP: Asn134, Lys135, Asp137, Ala165, and Lys166. The interval 185 to 216 (NEPQNAAGAPGRNRGVDLQENNPASRSQCCSN) is disordered. Residues 203-216 (QENNPASRSQCCSN) are compositionally biased toward polar residues. 2 S-geranylgeranyl cysteine lipidation sites follow: Cys213 and Cys214.

Belongs to the small GTPase superfamily. Rab family. Interacts with EEA1 and INCA1. Interacts with GDI1, GDI2, CHML and CHM; phosphorylation at Ser-85 disrupts this interaction. Requires Mg(2+) as cofactor. In terms of processing, phosphorylation of Ser-85 in the switch II region by LRRK2 prevents the association of RAB regulatory proteins, including CHM, CHML and RAB GDP dissociation inhibitors GDI1 and GDI2.

Its subcellular location is the cell membrane. It is found in the early endosome membrane. The protein localises to the melanosome. It carries out the reaction GTP + H2O = GDP + phosphate + H(+). Regulated by guanine nucleotide exchange factors (GEFs) which promote the exchange of bound GDP for free GTP. Regulated by GTPase activating proteins (GAPs) which increase the GTP hydrolysis activity. Inhibited by GDP dissociation inhibitors (GDIs). The small GTPases Rab are key regulators of intracellular membrane trafficking, from the formation of transport vesicles to their fusion with membranes. Rabs cycle between an inactive GDP-bound form and an active GTP-bound form that is able to recruit to membranes different sets of downstream effectors directly responsible for vesicle formation, movement, tethering and fusion. The chain is Ras-related protein Rab-5C (RAB5C) from Bos taurus (Bovine).